The primary structure comprises 270 residues: tRNA pseudouridine synthase A (270 aa).

Asp-51 serves as the catalytic Nucleophile. Tyr-109 serves as a coordination point for substrate.

Belongs to the tRNA pseudouridine synthase TruA family. As to quaternary structure, homodimer.

It carries out the reaction uridine(38/39/40) in tRNA = pseudouridine(38/39/40) in tRNA. In terms of biological role, formation of pseudouridine at positions 38, 39 and 40 in the anticodon stem and loop of transfer RNAs. The chain is tRNA pseudouridine synthase A from Burkholderia vietnamiensis (strain G4 / LMG 22486) (Burkholderia cepacia (strain R1808)).